The following is a 1014-amino-acid chain: Isoleucine--tRNA ligase (1014 aa).

The short motif at 48–58 (PTANGRPGIHH) is the 'HIGH' region element. The short motif at 628-632 (KMSKS) is the 'KMSKS' region element. Position 631 (Lys631) interacts with ATP.

Belongs to the class-I aminoacyl-tRNA synthetase family. IleS type 2 subfamily. As to quaternary structure, monomer. Requires Zn(2+) as cofactor.

It is found in the cytoplasm. The enzyme catalyses tRNA(Ile) + L-isoleucine + ATP = L-isoleucyl-tRNA(Ile) + AMP + diphosphate. Functionally, catalyzes the attachment of isoleucine to tRNA(Ile). As IleRS can inadvertently accommodate and process structurally similar amino acids such as valine, to avoid such errors it has two additional distinct tRNA(Ile)-dependent editing activities. One activity is designated as 'pretransfer' editing and involves the hydrolysis of activated Val-AMP. The other activity is designated 'posttransfer' editing and involves deacylation of mischarged Val-tRNA(Ile). This is Isoleucine--tRNA ligase from Dehalococcoides mccartyi (strain ATCC BAA-2266 / KCTC 15142 / 195) (Dehalococcoides ethenogenes (strain 195)).